Here is a 260-residue protein sequence, read N- to C-terminus: Cytosolic Fe-S cluster assembly factor Nubp2 homolog (260 aa).

14-21 (GKGGVGKS) lines the ATP pocket. [4Fe-4S] cluster-binding residues include Cys-188 and Cys-191.

This sequence belongs to the Mrp/NBP35 ATP-binding proteins family. NUBP2/CFD1 subfamily. As to quaternary structure, heterotetramer of 2 Nubp1 and 2 Nubp2 chains. Requires [4Fe-4S] cluster as cofactor.

The protein localises to the cytoplasm. Functionally, component of the cytosolic iron-sulfur (Fe/S) protein assembly (CIA) machinery. Required for maturation of extramitochondrial Fe-S proteins. The Nubp1-Nubp2 heterotetramer forms a Fe-S scaffold complex, mediating the de novo assembly of an Fe-S cluster and its transfer to target apoproteins. The polypeptide is Cytosolic Fe-S cluster assembly factor Nubp2 homolog (Drosophila sechellia (Fruit fly)).